The following is a 185-amino-acid chain: Ribosome-recycling factor (185 aa).

It belongs to the RRF family.

Its subcellular location is the cytoplasm. Functionally, responsible for the release of ribosomes from messenger RNA at the termination of protein biosynthesis. May increase the efficiency of translation by recycling ribosomes from one round of translation to another. This chain is Ribosome-recycling factor, found in Campylobacter jejuni subsp. jejuni serotype O:23/36 (strain 81-176).